The chain runs to 510 residues: NAD(P)H-quinone oxidoreductase subunit 2 A, chloroplastic (510 aa).

The next 14 membrane-spanning stretches (helical) occupy residues 31–51, 57–77, 99–119, 124–144, 149–169, 184–204, 229–249, 261–281, 295–315, 323–343, 354–374, 395–415, 418–438, and 484–504; these read LIFPECILIFGLILLLMIDLT, IPWLYFISSTSLVMSITALLF, IFQFLILLCSTLCIPLSVEYI, MAITEFLLFVLTATLGGMFLC, LITIFVALECFSLCSYLLSGY, LLMGGASSSILVYGFSWLYGL, ISIALIFITVGIGFKLSLAPF, PTPVVAFLSVTSKVAALALAT, WHLLLEILAILSMILGNLIAI, MLAYSSIGQIGYVIIGIIVGD, YMLFYISMNLGTFACIVLFGL, ALSLALCLLSLGGLPPLAGFF, LYLFWCGWQAGLYFLVLIGLL, and MIVCVIASTILGISMNPIIAI.

The protein belongs to the complex I subunit 2 family. NDH is composed of at least 16 different subunits, 5 of which are encoded in the nucleus.

It localises to the plastid. The protein localises to the chloroplast thylakoid membrane. The enzyme catalyses a plastoquinone + NADH + (n+1) H(+)(in) = a plastoquinol + NAD(+) + n H(+)(out). The catalysed reaction is a plastoquinone + NADPH + (n+1) H(+)(in) = a plastoquinol + NADP(+) + n H(+)(out). Functionally, NDH shuttles electrons from NAD(P)H:plastoquinone, via FMN and iron-sulfur (Fe-S) centers, to quinones in the photosynthetic chain and possibly in a chloroplast respiratory chain. The immediate electron acceptor for the enzyme in this species is believed to be plastoquinone. Couples the redox reaction to proton translocation, and thus conserves the redox energy in a proton gradient. The chain is NAD(P)H-quinone oxidoreductase subunit 2 A, chloroplastic from Nicotiana tabacum (Common tobacco).